Consider the following 728-residue polypeptide: E3 ubiquitin-protein ligase LNX (728 aa).

Residues 45–83 form an RING-type zinc finger; the sequence is CHICLQALLDPLDTPCGHTYCTLCLTNFLVEKDFCPVDR. Positions 185–188 match the NPXY motif motif; it reads NPAY. Residues 185–220 form a disordered region; it reads NPAYVSSVEDGEPVANSSDSGRSNRTRARPFERSTM. Positions 186–244 are interaction with MAGEB18; sequence PAYVSSVEDGEPVANSSDSGRSNRTRARPFERSTMRSRSFKKINRALSALRRTKSGSVV. 2 consecutive PDZ domains span residues 278–362 and 385–467; these read SIKI…VLRE and HVIL…VSRQ. A Phosphoserine modification is found at serine 445. A disordered region spans residues 481 to 500; the sequence is WISNGQQSPGPGERNTASKP. 2 consecutive PDZ domains span residues 508–593 and 638–723; these read VVSV…ALEV and DVIL…IASW.

In terms of assembly, interacts with CXADR. Interacts with MAGEB18 and MAGEF1. Interacts with the phosphotyrosine interaction domain of all isoforms of NUMB. IGSF5/JAM4 interacts with isoform 2 through the second PDZ domain, other isoforms may also interact with IGSF5/JAM4. As to expression, isoform 1 and isoform 2 are expressed in the heart. Isoform 1 is also expressed in kidney, lung and skeletal muscle while isoform 2 is also expressed in brain.

The protein resides in the cytoplasm. It carries out the reaction S-ubiquitinyl-[E2 ubiquitin-conjugating enzyme]-L-cysteine + [acceptor protein]-L-lysine = [E2 ubiquitin-conjugating enzyme]-L-cysteine + N(6)-ubiquitinyl-[acceptor protein]-L-lysine.. It participates in protein modification; protein ubiquitination. Functionally, E3 ubiquitin-protein ligase that mediates ubiquitination and subsequent proteasomal degradation of NUMB. E3 ubiquitin ligases accept ubiquitin from an E2 ubiquitin-conjugating enzyme in the form of a thioester and then directly transfers the ubiquitin to targeted substrates. Mediates ubiquitination of isoform p66 and isoform p72 of NUMB, but not that of isoform p71 or isoform p65. Isoform 2 provides an endocytic scaffold for IGSF5/JAM4. The protein is E3 ubiquitin-protein ligase LNX (Lnx1) of Mus musculus (Mouse).